The chain runs to 393 residues: NAD(P)H-quinone oxidoreductase subunit H, chloroplastic (393 aa).

The protein belongs to the complex I 49 kDa subunit family. NDH is composed of at least 16 different subunits, 5 of which are encoded in the nucleus.

Its subcellular location is the plastid. It localises to the chloroplast thylakoid membrane. The enzyme catalyses a plastoquinone + NADH + (n+1) H(+)(in) = a plastoquinol + NAD(+) + n H(+)(out). It carries out the reaction a plastoquinone + NADPH + (n+1) H(+)(in) = a plastoquinol + NADP(+) + n H(+)(out). Functionally, NDH shuttles electrons from NAD(P)H:plastoquinone, via FMN and iron-sulfur (Fe-S) centers, to quinones in the photosynthetic chain and possibly in a chloroplast respiratory chain. The immediate electron acceptor for the enzyme in this species is believed to be plastoquinone. Couples the redox reaction to proton translocation, and thus conserves the redox energy in a proton gradient. The chain is NAD(P)H-quinone oxidoreductase subunit H, chloroplastic from Calycanthus floridus var. glaucus (Eastern sweetshrub).